Here is a 306-residue protein sequence, read N- to C-terminus: Recombination-associated protein RdgC (306 aa).

This sequence belongs to the RdgC family.

The protein resides in the cytoplasm. The protein localises to the nucleoid. May be involved in recombination. The polypeptide is Recombination-associated protein RdgC (Pseudomonas aeruginosa (strain LESB58)).